Reading from the N-terminus, the 185-residue chain is Somatotropin (185 aa).

C52 and C158 are joined by a disulfide. E167 provides a ligand contact to Zn(2+). C175 and C183 are disulfide-bonded.

The protein belongs to the somatotropin/prolactin family.

It localises to the secreted. Functionally, growth hormone plays an important role in growth control and is involved in the regulation of several anabolic processes. Implicated as an osmoregulatory substance important for seawater adaptation. The chain is Somatotropin (gh) from Katsuwonus pelamis (Skipjack tuna).